The chain runs to 83 residues: Toxin TdNa5 (83 aa).

Positions 1–20 are cleaved as a signal peptide; that stretch reads MKTIIFFIACLMLIDVVVES. The 62-residue stretch at 21–82 folds into the LCN-type CS-alpha/beta domain; that stretch reads KDGYIIEHRG…IFDSNNNKCG (62 aa). Disulfide bonds link Cys-31–Cys-81, Cys-35–Cys-57, Cys-43–Cys-62, and Cys-47–Cys-64. At Cys-81 the chain carries Cysteine amide.

The protein belongs to the long (4 C-C) scorpion toxin superfamily. Sodium channel inhibitor family. Beta subfamily. Expressed by the venom gland.

Its subcellular location is the secreted. Inhibits the sodium currents (Nav) in an apparent irreversible manner. Produces small depolarization and induces repetitive firing in squid axons. Is specific for arthropods (crickets, triatomides, crabs and squids), but is non-toxic to mice. Shows antibacterial activity against both Gram-positive and Gram-negative bacteria. The chain is Toxin TdNa5 from Tityus discrepans (Venezuelan scorpion).